A 137-amino-acid chain; its full sequence is ATP synthase epsilon chain (137 aa).

It belongs to the ATPase epsilon chain family. In terms of assembly, F-type ATPases have 2 components, CF(1) - the catalytic core - and CF(0) - the membrane proton channel. CF(1) has five subunits: alpha(3), beta(3), gamma(1), delta(1), epsilon(1). CF(0) has three main subunits: a, b and c.

Its subcellular location is the cellular thylakoid membrane. Produces ATP from ADP in the presence of a proton gradient across the membrane. This Nostoc sp. (strain PCC 7120 / SAG 25.82 / UTEX 2576) protein is ATP synthase epsilon chain (atpC).